The sequence spans 888 residues: CRISPR-associated endonuclease/helicase Cas3 (888 aa).

The region spanning 20 to 231 is the HD Cas3-type domain; sequence KGNDIHLLIY…AGFCSLADWL (212 aa). Mg(2+)-binding residues include aspartate 75 and histidine 160. The Helicase ATP-binding domain maps to 301–504; that stretch reads DALPVAPGLT…LDTYGLHTDP (204 aa). Residue 314-321 participates in ATP binding; sequence APTGSGKT. The DEAH box motif lies at 452-455; the sequence is DEVH. The 180-residue stretch at 556-735 folds into the Helicase C-terminal domain; the sequence is MLERMIAAAN…AYRQWLDSIY (180 aa).

In the N-terminal section; belongs to the CRISPR-associated nuclease Cas3-HD family. The protein in the central section; belongs to the CRISPR-associated helicase Cas3 family. As to quaternary structure, interacts with the CasA subunit of Cascade once Cascade has recognized target DNA. The cofactor is Mg(2+).

In terms of biological role, CRISPR (clustered regularly interspaced short palindromic repeat), is an adaptive immune system that provides protection against mobile genetic elements (viruses, transposable elements and conjugative plasmids). CRISPR clusters contain sequences complementary to antecedent mobile elements and target invading nucleic acids. CRISPR clusters are transcribed and processed into CRISPR RNA (crRNA). Cas3 plus Cascade participate in CRISPR interference, the third stage of CRISPR immunity. Functionally, acts as an endonuclease, a 3'-5'exonuclease, and an ATP-dependent dsDNA helicase. Anneals and unwinds R-loops (in which crRNA binds the target DNA, displacing the noncomplementary strand). Unwinding requires ATP, annealing does not. Required along with the Cascade complex for resistance to bacteriophage lambda infection as well as the ability to cure CRISPR-encoding high-copy number plasmid. A Cas3-CasA fusion protein purified with the Cascade complex nicks target plasmid in the presence but not absence of Mg(2+), and degrades plasmid fully in the presence of Mg(2+) and ATP, suggesting the helicase activity is required for complete degradation. This chain is CRISPR-associated endonuclease/helicase Cas3 (ygcB), found in Escherichia coli (strain K12).